A 469-amino-acid chain; its full sequence is Argininosuccinate lyase (469 aa).

It belongs to the lyase 1 family. Argininosuccinate lyase subfamily.

It localises to the cytoplasm. It carries out the reaction 2-(N(omega)-L-arginino)succinate = fumarate + L-arginine. The protein operates within amino-acid biosynthesis; L-arginine biosynthesis; L-arginine from L-ornithine and carbamoyl phosphate: step 3/3. The polypeptide is Argininosuccinate lyase (Burkholderia cenocepacia (strain HI2424)).